Reading from the N-terminus, the 319-residue chain is Olfactory receptor 56B4 (319 aa).

The Extracellular portion of the chain corresponds to Met1 to His31. A helical transmembrane segment spans residues Trp32–Ile52. Over Ile53–Val60 the chain is Cytoplasmic. A helical transmembrane segment spans residues Leu61–Thr81. The Extracellular portion of the chain corresponds to Thr82–Ala105. Cys103 and Cys195 are joined by a disulfide. A helical transmembrane segment spans residues Gln106–Val126. Over Asp127–Ala145 the chain is Cytoplasmic. The chain crosses the membrane as a helical span at residues Phe146–Pro166. At Ile167–Lys202 the chain is on the extracellular side. The helical transmembrane segment at Phe203–Ser223 threads the bilayer. The Cytoplasmic segment spans residues Tyr224–Ala243. The helical transmembrane segment at Leu244–Leu263 threads the bilayer. Topologically, residues Ser264 to Pro277 are extracellular. A helical transmembrane segment spans residues Val278–Leu298. The Cytoplasmic segment spans residues Arg299–Lys319.

Belongs to the G-protein coupled receptor 1 family.

Its subcellular location is the cell membrane. Its function is as follows. Odorant receptor. The polypeptide is Olfactory receptor 56B4 (OR56B4) (Homo sapiens (Human)).